The following is a 198-amino-acid chain: COMM domain-containing protein 9 (198 aa).

Position 2 is an N-acetylalanine (alanine 2). The region spanning 122-196 (RLVDLDWRVD…RIRDQLSAVA (75 aa)) is the COMM domain.

It belongs to the COMM domain-containing protein 9 family. As to quaternary structure, component of the commander complex consisting of the CCC subcomplex and the retriever subcomplex. Component of the CCC (COMMD/CCDC22/CCDC93) subcomplex consisting of COMMD1, COMMD2, COMMD3, COMMD4, COMMD5, COMMD6, COMMD7, COMMD8, COMMD9, COMMD10, CCDC22 and CCDC93; within the complex forms a heterodimer with COMMD7. Interacts with RELB and NFKB1/p105. Interacts with CCDC22, CCDC93, SCNN1B, CUL1.

It is found in the nucleus. The protein resides in the cytoplasmic vesicle. Its function is as follows. Scaffold protein in the commander complex that is essential for endosomal recycling of transmembrane cargos; the commander complex is composed of the CCC subcomplex and the retriever subcomplex. May modulate activity of cullin-RING E3 ubiquitin ligase (CRL) complexes. May down-regulate activation of NF-kappa-B. Modulates Na(+) transport in epithelial cells by regulation of apical cell surface expression of amiloride-sensitive sodium channel (ENaC) subunits. The chain is COMM domain-containing protein 9 (COMMD9) from Bos taurus (Bovine).